A 506-amino-acid chain; its full sequence is (+)-piperitol/(+)-sesamin synthase CYP81Q2 (506 aa).

Residues 3 to 23 (AEMLYSALALTFAIFMVYRIL) traverse the membrane as a helical segment. C439 serves as a coordination point for heme.

It belongs to the cytochrome P450 family. Heme serves as cofactor. Expressed in seeds.

It is found in the membrane. The catalysed reaction is (+)-piperitol + reduced [NADPH--hemoprotein reductase] + O2 = (+)-sesamin + oxidized [NADPH--hemoprotein reductase] + 2 H2O + H(+). The enzyme catalyses (+)-pinoresinol + reduced [NADPH--hemoprotein reductase] + O2 = (+)-piperitol + oxidized [NADPH--hemoprotein reductase] + 2 H2O + H(+). Its function is as follows. Involved in the biosynthesis of (+)-sesamin, a furofuran class lignan. Functions in a dual catalytic mode. Catalyzes the synthesis of (+)-sesamin from (+)- pinoresinol by formation of two successive methylenedioxy bridges on (+)-pinoresinol and (+)-piperitol, respectively. In Sesamum radiatum (Black benniseed), this protein is (+)-piperitol/(+)-sesamin synthase CYP81Q2.